The primary structure comprises 427 residues: Putative F-box protein At4g10740 (427 aa).

The 46-residue stretch at 2–47 (RTTMSNLPKELVEDIVSRVPLHCLRAMRLTCKNWNALLESQSFKKM) folds into the F-box domain.

The chain is Putative F-box protein At4g10740 from Arabidopsis thaliana (Mouse-ear cress).